A 179-amino-acid polypeptide reads, in one-letter code: Tetratricopeptide repeat protein 36 (179 aa).

TPR repeat units follow at residues 43–76 (SSQL…CPLN), 77–110 (PSAY…AGPK), and 115–148 (CQAY…GSSF).

This sequence belongs to the TTC36 family.

This is Tetratricopeptide repeat protein 36 from Caenorhabditis briggsae.